Here is a 122-residue protein sequence, read N- to C-terminus: Replication factor A protein 3 (122 aa).

It belongs to the replication factor A protein 3 family. In terms of assembly, component of the heterotrimeric canonical replication protein A complex (RPA). Post-translationally, the N-terminus is blocked.

It localises to the nucleus. In terms of biological role, as part of the replication protein A (RPA/RP-A), a single-stranded DNA-binding heterotrimeric complex, may play an essential role in DNA replication, recombination and repair. Binds and stabilizes single-stranded DNA intermediates, preventing complementary DNA reannealing and recruiting different proteins involved in DNA metabolism. Stimulates the activity of a cognate strand exchange protein (SEP1). The sequence is that of Replication factor A protein 3 (RFA3) from Saccharomyces cerevisiae (strain ATCC 204508 / S288c) (Baker's yeast).